A 458-amino-acid polypeptide reads, in one-letter code: MKLLPMDIPRVVIAGTSSKVGKTMISIGLMRLLVNRGYEVQPYKVGPDFIDPGFHHLATGRYSRNLDSFMLSRSAILETFIRNFRGADVAIIEGKTGLYDSSDAVSEKGSVAEVSKILKAPVVLVANVERLNRTAAAIILGYKLFDPDVLLKGVILNRVGSERHAGKVRTAVEKLAGVRVLGVVPRKKVKMPYRHLGLVTAYEREDMDELLDNIAEIVEKHVDVDKILEIAEKAPPLDSVFEDEKEDEEKKYVKIGVIRDQVFSFYYQDNLDELSKYAELVFVNSLTDKRLPDVDALYIGGGFPEVFAEGLEKNEKLRNEIYDFCQSGNPVYAECGGLMYLGESLETSEGEFEMVGFLPLKTKMYERFQAQGYSVYRTLKPCIIAKRNQKIVGHEFHYSRPTLTGKADFAFRVERGFGIDGRRDGILKENTLGCYIHVHFLSDKSIARRFVKKAMKKK.

In terms of domain architecture, GATase cobBQ-type spans 254–445 (KIGVIRDQVF…IHVHFLSDKS (192 aa)). C335 (nucleophile) is an active-site residue.

The protein belongs to the CobB/CbiA family. It depends on Mg(2+) as a cofactor.

It catalyses the reaction cob(II)yrinate + 2 L-glutamine + 2 ATP + 2 H2O = cob(II)yrinate a,c diamide + 2 L-glutamate + 2 ADP + 2 phosphate + 2 H(+). Its pathway is cofactor biosynthesis; adenosylcobalamin biosynthesis; cob(II)yrinate a,c-diamide from sirohydrochlorin (anaerobic route): step 10/10. Functionally, catalyzes the ATP-dependent amidation of the two carboxylate groups at positions a and c of cobyrinate, using either L-glutamine or ammonia as the nitrogen source. This chain is Cobyrinate a,c-diamide synthase, found in Archaeoglobus fulgidus (strain ATCC 49558 / DSM 4304 / JCM 9628 / NBRC 100126 / VC-16).